The following is a 212-amino-acid chain: Orotate phosphoribosyltransferase (212 aa).

5-phospho-alpha-D-ribose 1-diphosphate is bound by residues Arg-97, Lys-101, His-103, and 123–131 (DDLISTGGS). Ser-127 is a binding site for orotate.

It belongs to the purine/pyrimidine phosphoribosyltransferase family. PyrE subfamily. Homodimer. The cofactor is Mg(2+).

It carries out the reaction orotidine 5'-phosphate + diphosphate = orotate + 5-phospho-alpha-D-ribose 1-diphosphate. It participates in pyrimidine metabolism; UMP biosynthesis via de novo pathway; UMP from orotate: step 1/2. In terms of biological role, catalyzes the transfer of a ribosyl phosphate group from 5-phosphoribose 1-diphosphate to orotate, leading to the formation of orotidine monophosphate (OMP). This chain is Orotate phosphoribosyltransferase, found in Lactiplantibacillus plantarum (strain ATCC BAA-793 / NCIMB 8826 / WCFS1) (Lactobacillus plantarum).